The sequence spans 358 residues: Src kinase-associated phosphoprotein 2 (358 aa).

Residues Ser5 and Ser6 each carry the phosphoserine modification. The tract at residues 62–88 (ESQDKGDAEDGEEYDDPFAGPPDTISL) is disordered. At Tyr75 the chain carries Phosphotyrosine. 2 positions are modified to phosphoserine: Ser87 and Ser90. A PH domain is found at 116–219 (FVLKAGYLEK…WVQQLNFVLQ (104 aa)). A phosphotyrosine mark is found at Tyr151 and Tyr197. Ser223 carries the post-translational modification Phosphoserine. A disordered region spans residues 232-254 (ERGELYDDVDHPLPSSSPTRSLP). The segment covering 243–253 (PLPSSSPTRSL) has biased composition (low complexity). Residue Tyr260 is modified to Phosphotyrosine. Ser282 and Ser285 each carry phosphoserine. In terms of domain architecture, SH3 spans 296–357 (NYANFYQGLW…PKAYVMEMYD (62 aa)).

The protein belongs to the SKAP family. As to quaternary structure, interacts with FYB1, which is required for SKAP2 protein stability. Interacts with PTPNS1. Part of a complex consisting of SKAP2, FYB1 and PTPNS1. Part of a complex consisting of SKAP2, FYB1 and LILRB3. Interacts with LAT, GRB2, PTK2B and PRAM1. May interact with actin. May interact with FYN, HCK and LYN. Interacts with FASLG.

It localises to the cytoplasm. Functionally, may be involved in B-cell and macrophage adhesion processes. In B-cells, may act by coupling the B-cell receptor (BCR) to integrin activation. May play a role in src signaling pathway. This Bos taurus (Bovine) protein is Src kinase-associated phosphoprotein 2 (SKAP2).